The sequence spans 182 residues: Peptidyl-tRNA hydrolase (182 aa).

A tRNA-binding site is contributed by Y14. The active-site Proton acceptor is H19. Residues Y65, N67, and N113 each coordinate tRNA.

This sequence belongs to the PTH family. In terms of assembly, monomer.

The protein localises to the cytoplasm. The catalysed reaction is an N-acyl-L-alpha-aminoacyl-tRNA + H2O = an N-acyl-L-amino acid + a tRNA + H(+). Functionally, hydrolyzes ribosome-free peptidyl-tRNAs (with 1 or more amino acids incorporated), which drop off the ribosome during protein synthesis, or as a result of ribosome stalling. In terms of biological role, catalyzes the release of premature peptidyl moieties from peptidyl-tRNA molecules trapped in stalled 50S ribosomal subunits, and thus maintains levels of free tRNAs and 50S ribosomes. This Rickettsia peacockii (strain Rustic) protein is Peptidyl-tRNA hydrolase.